We begin with the raw amino-acid sequence, 460 residues long: MGESVLSRLGQWISNTPLRSLDQAYEAALRIKAIEDQYFQGGSIGSNGQHGQNVSRYFQIQLRRQLRQIDLRLAEFRASSAFSRLPDPEQNGSGPTSAQDKAQQLHAAEANVSESSSENSENGRQRRDLSILEKLQFIDQVTSRYKRPTRKSQPISASISTSPEPLERPEQPTSTQPSSSNVSVKAGSGNGAAPVASKAAILPRSILRTASQIRRELSSQAEEELIQEYREARTRTLVSIRFLLLLAILPLLTQILSKNFLFGPLVDHLQQREPAIVALSHEFQEKALTEFEFFKERMEFERALHHQSPEWDLESADQLSMKAEELLKKYSRRNSEGLKNILADLLSLLVFGWLIFVGREEIEVLKSFLDRLIYGLSDSAKAFIIILFTDVFVGYHSPHGWEVLLGNLAAHLGVPENRDFIYGFIATFPVFLDTLFKYWIFRYLNRVSPSSVATYRAMND.

Disordered regions lie at residues 82–128 (FSRL…QRRD) and 143–190 (SRYK…GSGN). Residues 90–102 (QNGSGPTSAQDKA) show a composition bias toward polar residues. Residues 107–120 (AAEANVSESSSENS) are compositionally biased toward low complexity. Polar residues predominate over residues 151–163 (KSQPISASISTSP). Residues 171 to 184 (QPTSTQPSSSNVSV) show a composition bias toward low complexity. The next 4 helical transmembrane spans lie at 242-262 (FLLL…NFLF), 337-357 (GLKN…LIFV), 373-393 (IYGL…DVFV), and 420-440 (FIYG…KYWI).

This sequence belongs to the CemA family.

Its subcellular location is the cell inner membrane. Functionally, required for H(+) efflux immediately after light irradiation to form a rapid H(+) concentration gradient across the thylakoid membranes. Together with PxcL, contributes to transient H(+) uptake following dark to light transition. The polypeptide is Proton extrusion protein PxcA (Synechococcus sp. (strain JA-2-3B'a(2-13)) (Cyanobacteria bacterium Yellowstone B-Prime)).